The primary structure comprises 37 residues: DGIFPTVGAGDVWYGCGDGAVGIVAETPFASTTTNPA.

The segment at 1–26 (DGIFPTVGAGDVWYGCGDGAVGIVAE) is central domain. Residues 27–37 (TPFASTTTNPA) form a right arm region.

It belongs to the chorion protein family.

This protein is one of many from the eggshell of the silk moth. The protein is Chorion class CB protein PCH12 of Antheraea polyphemus (Polyphemus moth).